A 677-amino-acid chain; its full sequence is Elongation factor G 2 (677 aa).

In terms of domain architecture, tr-type G spans 8-283 (SRIRNIGIIA…AVVNFLPSPE (276 aa)). GTP contacts are provided by residues 17–24 (AHIDAGKT), 81–85 (DTPGH), and 135–138 (NKMD).

It belongs to the TRAFAC class translation factor GTPase superfamily. Classic translation factor GTPase family. EF-G/EF-2 subfamily.

The protein localises to the cytoplasm. Its function is as follows. Catalyzes the GTP-dependent ribosomal translocation step during translation elongation. During this step, the ribosome changes from the pre-translocational (PRE) to the post-translocational (POST) state as the newly formed A-site-bound peptidyl-tRNA and P-site-bound deacylated tRNA move to the P and E sites, respectively. Catalyzes the coordinated movement of the two tRNA molecules, the mRNA and conformational changes in the ribosome. In Syntrophus aciditrophicus (strain SB), this protein is Elongation factor G 2.